A 584-amino-acid polypeptide reads, in one-letter code: DNA ligase (584 aa).

ATP is bound at residue Glu-249. Lys-251 (N6-AMP-lysine intermediate) is an active-site residue. Residues Arg-256, Arg-271, Glu-301, Phe-341, Arg-416, and Lys-422 each coordinate ATP.

The protein belongs to the ATP-dependent DNA ligase family. Mg(2+) is required as a cofactor.

It catalyses the reaction ATP + (deoxyribonucleotide)n-3'-hydroxyl + 5'-phospho-(deoxyribonucleotide)m = (deoxyribonucleotide)n+m + AMP + diphosphate.. DNA ligase that seals nicks in double-stranded DNA during DNA replication, DNA recombination and DNA repair. The chain is DNA ligase from Pyrobaculum islandicum (strain DSM 4184 / JCM 9189 / GEO3).